A 364-amino-acid polypeptide reads, in one-letter code: Fructose-1,6-bisphosphatase class 1 2 (364 aa).

Mg(2+) contacts are provided by Glu101, Asp123, Leu125, and Asp126. Residues 126 to 129 (DGSS) and Asn218 each bind substrate. Residue Glu290 participates in Mg(2+) binding.

It belongs to the FBPase class 1 family. In terms of assembly, homotetramer. Requires Mg(2+) as cofactor.

The protein resides in the cytoplasm. The catalysed reaction is beta-D-fructose 1,6-bisphosphate + H2O = beta-D-fructose 6-phosphate + phosphate. It participates in carbohydrate biosynthesis; gluconeogenesis. In Cupriavidus necator (strain ATCC 17699 / DSM 428 / KCTC 22496 / NCIMB 10442 / H16 / Stanier 337) (Ralstonia eutropha), this protein is Fructose-1,6-bisphosphatase class 1 2.